The sequence spans 122 residues: Small ribosomal subunit protein uS13 (122 aa).

A disordered region spans residues 95–122; sequence GLPVRGQKTKTNARTRKGPKRTVANKKK.

The protein belongs to the universal ribosomal protein uS13 family. Part of the 30S ribosomal subunit. Forms a loose heterodimer with protein S19. Forms two bridges to the 50S subunit in the 70S ribosome.

In terms of biological role, located at the top of the head of the 30S subunit, it contacts several helices of the 16S rRNA. In the 70S ribosome it contacts the 23S rRNA (bridge B1a) and protein L5 of the 50S subunit (bridge B1b), connecting the 2 subunits; these bridges are implicated in subunit movement. Contacts the tRNAs in the A and P-sites. The protein is Small ribosomal subunit protein uS13 of Agathobacter rectalis (strain ATCC 33656 / DSM 3377 / JCM 17463 / KCTC 5835 / VPI 0990) (Eubacterium rectale).